The primary structure comprises 1096 residues: Protein spire (1096 aa).

Disordered stretches follow at residues 1-79 (MTEH…GNGT) and 184-211 (VESQ…TSSV). A compositionally biased stretch (polar residues) spans 37–51 (LSTSPDSANGDAQQA). Over residues 53-65 (THTHIISHTHSKG) the composition is skewed to basic residues. 2 stretches are compositionally biased toward low complexity: residues 66–77 (AAKTQTQTQNGN) and 189–201 (QEAS…QKQP). One can recognise a KIND domain in the interval 111-366 (VTLNNILDSF…RALATETIEL (256 aa)). The stretch at 315 to 340 (KRWDDEAEEERNDTKELEHIIETCRN) forms a coiled coil. WH2 domains follow at residues 436-454 (PYEI…LRKV) and 500-517 (PREQ…LKQI). Disordered stretches follow at residues 560–588 (DDSS…AHLA), 614–656 (QECQ…PSFT), and 693–762 (QSNL…LGPW). Basic residues predominate over residues 574–585 (HQHHQQHQPHHA). Low complexity-rich tracts occupy residues 633 to 645 (APRQ…QAQA) and 714 to 725 (DAGSQSQSGASS). Positions 737–754 (EGDHSQTTDGPPRLDEAH) are enriched in basic and acidic residues. The spir-box stretch occupies residues 780-800 (LSVTLAEIVHIRSVMTKAELE). The segment covering 874–894 (PASSSTPSPSHHAHQAHSSST) has biased composition (low complexity). Disordered regions lie at residues 874-899 (PASS…NIMD), 912-958 (RSES…APGH), and 997-1021 (RSME…SSTL). Polar residues predominate over residues 921–941 (STVGSAPSSPKHQRSNMSTPG).

The protein belongs to the spire family. As to quaternary structure, interacts with bsk, Rho1, Rac1, Cdc42 and wash. Interacts with capu. In terms of processing, phosphorylated by Jnk kinase (bsk).

The protein localises to the cytoplasm. The protein resides in the cytoskeleton. Its subcellular location is the perinuclear region. It is found in the cell membrane. It localises to the cytoplasmic vesicle membrane. Functionally, acts as an actin nucleation factor, remains associated with the slow-growing pointed end of the new filament. Promotes dissociation of capu from the barbed end of actin filaments. Involved in intracellular vesicle transport along actin fibers, providing a novel link between actin cytoskeleton dynamics and intracellular transport. Required for localization of determinants within the developing oocyte to the posterior pole and to the dorsal anterior corner. Links Rho family signaling and Jnk function to the actin cytoskeleton. The polypeptide is Protein spire (Drosophila pseudoobscura pseudoobscura (Fruit fly)).